The chain runs to 163 residues: SsrA-binding protein (163 aa).

This sequence belongs to the SmpB family.

It localises to the cytoplasm. Its function is as follows. Required for rescue of stalled ribosomes mediated by trans-translation. Binds to transfer-messenger RNA (tmRNA), required for stable association of tmRNA with ribosomes. tmRNA and SmpB together mimic tRNA shape, replacing the anticodon stem-loop with SmpB. tmRNA is encoded by the ssrA gene; the 2 termini fold to resemble tRNA(Ala) and it encodes a 'tag peptide', a short internal open reading frame. During trans-translation Ala-aminoacylated tmRNA acts like a tRNA, entering the A-site of stalled ribosomes, displacing the stalled mRNA. The ribosome then switches to translate the ORF on the tmRNA; the nascent peptide is terminated with the 'tag peptide' encoded by the tmRNA and targeted for degradation. The ribosome is freed to recommence translation, which seems to be the essential function of trans-translation. This Corynebacterium diphtheriae (strain ATCC 700971 / NCTC 13129 / Biotype gravis) protein is SsrA-binding protein.